The chain runs to 286 residues: Mating type protein A-1 (286 aa).

Positions 40–95 (AAKKKVNGFMSFRSYYSPLFSQLPQKERSPFMTILWQHDPFHNEWNFMCSVYSSIR) form a DNA-binding region, alpha box.

It belongs to the MATALPHA1 family.

The protein localises to the nucleus. Functionally, required for expression of the heterokaryon incompatibility and sexual functions. This Neurospora africana protein is Mating type protein A-1 (MTA-1).